The primary structure comprises 110 residues: Cytochrome c oxidase subunit 4B (110 aa).

3 helical membrane passes run 29-49, 55-75, and 89-109; these read MIAF…VGYE, FVVP…LYYF, and FIYG…TVVW.

Belongs to the cytochrome c oxidase bacterial subunit 4 family.

Its subcellular location is the cell membrane. The enzyme catalyses 4 Fe(II)-[cytochrome c] + O2 + 8 H(+)(in) = 4 Fe(III)-[cytochrome c] + 2 H2O + 4 H(+)(out). This chain is Cytochrome c oxidase subunit 4B (caaD), found in Bacillus sp. (strain PS3).